Reading from the N-terminus, the 583-residue chain is Pentatricopeptide repeat-containing protein At2g33760 (583 aa).

PPR repeat units lie at residues 71-105 (DDFLFNSVIKSTSKLRLPLHCVAYYRRMLSSNVSP), 106-140 (SNYTFTSVIKSCADLSALRIGKGVHCHAVVSGFGL), 141-171 (DTYVQAALVTFYSKCGDMEGARQVFDRMPEK), 172-206 (SIVAWNSLVSGFEQNGLADEAIQVFYQMRESGFEP), 207-241 (DSATFVSLLSACAQTGAVSLGSWVHQYIISEGLDL), 242-276 (NVKLGTALINLYSRCGDVGKAREVFDKMKETNVAA), 277-303 (WTAMISAYGTHGYGQQAVELFNKMEDD), 309-339 (NNVTFVAVLSACAHAGLVEEGRSVYKRMTKS), and 345-379 (GVEHHVCMVDMLGRAGFLDEAYKFIHQLDATGKAT). The interval 383-458 (LWTAMLGACK…QVGYSVIEVE (76 aa)) is type E motif. The tract at residues 459–489 (NKTYMFSMGDESHQETGEIYRYLETLISRCK) is type E(+) motif. The tract at residues 490 to 583 (EIGYAPVSEE…NGSCSCLDYW (94 aa)) is type DYW motif.

Belongs to the PPR family. PCMP-H subfamily.

The protein is Pentatricopeptide repeat-containing protein At2g33760 (PCMP-H6) of Arabidopsis thaliana (Mouse-ear cress).